The following is a 1451-amino-acid chain: Transcription elongation factor SPT6 (1451 aa).

Residues 1 to 12 are compositionally biased toward basic and acidic residues; that stretch reads MEETGDSKLVPR. The interval 1 to 217 is disordered; the sequence is MEETGDSKLV…EDDETRQRRI (217 aa). The short motif at 8–12 is the Nuclear localization signal element; it reads KLVPR. The segment covering 29–51 has biased composition (acidic residues); sequence EEEEGEDVFDSSEEDEDIDEDED. Residues 76–85 are compositionally biased toward basic residues; sequence SKKRRKHKRR. A Nuclear localization signal motif is present at residues 77-85; that stretch reads KKRRKHKRR. Residues 88–100 are compositionally biased toward acidic residues; the sequence is EEDDRLSEDDLDL. A Phosphoserine modification is found at serine 94. The Nuclear localization signal motif lies at 120–125; it reads KRLKRV. Serine 134, serine 136, serine 148, and serine 155 each carry phosphoserine. The segment covering 153-162 has biased composition (acidic residues); sequence FFSEDEEEEE. The span at 180-192 shows a compositional bias: basic and acidic residues; sequence HENRNRTADKGGI. Acidic residues predominate over residues 194 to 211; that stretch reads DELDDFIEDDEFSDEDDE. 2 positions are modified to phosphoserine: serine 206 and serine 295. An SH2 domain is found at 1257 to 1354; it reads PYYFPFNGRQ…RLLNEMTSSE (98 aa).

It belongs to the SPT6 family. Interacts with CTR9.

The protein localises to the nucleus. The protein resides in the chromosome. Functionally, histone H3-H4 chaperone that plays a role in maintenance of chromatin structure during RNA polymerase II transcription elongation thereby repressing transcription initiation from cryptic promoters. Mediates the reassembly of nucleosomes onto the promoters of at least a selected set of genes during repression; the nucleosome reassembly is essential for transcriptional repression. Essential for viability. The sequence is that of Transcription elongation factor SPT6 (SPT6) from Saccharomyces cerevisiae (strain ATCC 204508 / S288c) (Baker's yeast).